The following is a 288-amino-acid chain: UPF0494 membrane protein C212.04c (288 aa).

Transmembrane regions (helical) follow at residues 107-127 (WVLL…KFKI), 144-164 (IWGP…AFNY), 174-194 (PLIS…SVII), and 198-218 (IAGV…GVIA).

This sequence belongs to the UPF0494 family.

The protein localises to the cytoplasm. It localises to the endoplasmic reticulum. Its subcellular location is the membrane. In Schizosaccharomyces pombe (strain 972 / ATCC 24843) (Fission yeast), this protein is UPF0494 membrane protein C212.04c.